The sequence spans 272 residues: MTLQEQIMKALHVQPVIDLKAEIRKRVDFLKDYVKKTGAKGFVLGISGGQDSTLAGRLAQLAVEEIRNEGGNATFIAVRLPYKVQKDEDDAQLALQFIQADQSVAFDIASTVDAFSNQYENLLDESLTDFNKGNVKARIRMVTQYAIGGQKGLLVIGTDHAAEAVTGFFTKFGDGGADLLPLTGLTKRQGRALLQELGADERLYLKMPTADLLDEKPGQADETELGITYDQLDDYLEGKTVPADVAEKIEKRYTVSEHKRQVPASMFDDWWK.

ATP is bound at residue 45 to 52 (GISGGQDS). Asp-51 lines the Mg(2+) pocket. Arg-138 contributes to the deamido-NAD(+) binding site. Thr-158 contributes to the ATP binding site. Residue Glu-163 coordinates Mg(2+). 2 residues coordinate deamido-NAD(+): Lys-171 and Asp-178. ATP is bound by residues Lys-187 and Thr-209. 258-259 (HK) provides a ligand contact to deamido-NAD(+).

It belongs to the NAD synthetase family. Homodimer.

The catalysed reaction is deamido-NAD(+) + NH4(+) + ATP = AMP + diphosphate + NAD(+) + H(+). The protein operates within cofactor biosynthesis; NAD(+) biosynthesis; NAD(+) from deamido-NAD(+) (ammonia route): step 1/1. Catalyzes the ATP-dependent amidation of deamido-NAD to form NAD. Uses ammonia as a nitrogen source. This chain is NH(3)-dependent NAD(+) synthetase, found in Bacillus thuringiensis subsp. konkukian (strain 97-27).